Reading from the N-terminus, the 269-residue chain is Formamidopyrimidine-DNA glycosylase (269 aa).

Proline 2 functions as the Schiff-base intermediate with DNA in the catalytic mechanism. Catalysis depends on glutamate 3, which acts as the Proton donor. Lysine 57 (proton donor; for beta-elimination activity) is an active-site residue. Histidine 90, arginine 109, and arginine 150 together coordinate DNA. An FPG-type zinc finger spans residues 235-269 (NVYGRAGQPCVQCDAILKADRHGQRSTAYCPQCQR). Arginine 259 serves as the catalytic Proton donor; for delta-elimination activity.

This sequence belongs to the FPG family. Monomer. Zn(2+) serves as cofactor.

It catalyses the reaction Hydrolysis of DNA containing ring-opened 7-methylguanine residues, releasing 2,6-diamino-4-hydroxy-5-(N-methyl)formamidopyrimidine.. The catalysed reaction is 2'-deoxyribonucleotide-(2'-deoxyribose 5'-phosphate)-2'-deoxyribonucleotide-DNA = a 3'-end 2'-deoxyribonucleotide-(2,3-dehydro-2,3-deoxyribose 5'-phosphate)-DNA + a 5'-end 5'-phospho-2'-deoxyribonucleoside-DNA + H(+). In terms of biological role, involved in base excision repair of DNA damaged by oxidation or by mutagenic agents. Acts as a DNA glycosylase that recognizes and removes damaged bases. Has a preference for oxidized purines, such as 7,8-dihydro-8-oxoguanine (8-oxoG). Has AP (apurinic/apyrimidinic) lyase activity and introduces nicks in the DNA strand. Cleaves the DNA backbone by beta-delta elimination to generate a single-strand break at the site of the removed base with both 3'- and 5'-phosphates. The polypeptide is Formamidopyrimidine-DNA glycosylase (Alcanivorax borkumensis (strain ATCC 700651 / DSM 11573 / NCIMB 13689 / SK2)).